The following is a 188-amino-acid chain: Large ribosomal subunit protein bL32m (188 aa).

Residues Cys110, Cys113, Cys123, and Cys126 each coordinate Zn(2+). The interval 162–188 (GETPSEHDQGKRIIERERKRPSWFTQN) is disordered. Over residues 165–181 (PSEHDQGKRIIERERKR) the composition is skewed to basic and acidic residues.

It belongs to the bacterial ribosomal protein bL32 family. Component of the mitochondrial ribosome large subunit (39S) which comprises a 16S rRNA and about 50 distinct proteins. In terms of processing, MRPL32 precursor is processed by the m-AAA protease (composed of AFG3L2 and SPG7), which cleaves the N-terminal transit peptide. Cleavage by the m-AAA protease takes place prior to assembly into the large subunit, an essential step for mitochondrial ribosome (mitoribosome) assembly. Proper processing by the m-AAA protease is dependent on the zinc-binding region within the tightly folded C-terminal domain of MRPL32: zinc-dependent folding halts degradation initiated from the N-terminus and triggers the release of mature MRPL32.

It localises to the mitochondrion. Its function is as follows. Component of the mitochondrial large ribosomal subunit (mt-LSU). The mitochondrial ribosome (mitoribosome) is a large ribonucleoprotein complex responsible for the synthesis of proteins inside mitochondria. This chain is Large ribosomal subunit protein bL32m (MRPL32), found in Bos taurus (Bovine).